A 591-amino-acid chain; its full sequence is L-gulonolactone oxidase 2 (591 aa).

The first 27 residues, 1 to 27 (MAFTFPPSYRTLVGLYYIFTLMHTAVS), serve as a signal peptide directing secretion. In terms of domain architecture, FAD-binding PCMH-type spans 56–238 (STCRAANVAY…SQVTFELQPM (183 aa)).

This sequence belongs to the oxygen-dependent FAD-linked oxidoreductase family. It depends on FAD as a cofactor.

It catalyses the reaction L-gulono-1,4-lactone + O2 = L-ascorbate + H2O2 + H(+). The protein operates within cofactor biosynthesis; L-ascorbate biosynthesis. Catalyzes the oxidation of L-gulono-1,4-lactone to ascorbic acid. L-gulono-1,4-lactone is oxidized to hydrogen peroxide and L-xylo-hexulonolactone which spontaneously isomerizes to L-ascorbate. In Arabidopsis thaliana (Mouse-ear cress), this protein is L-gulonolactone oxidase 2.